A 155-amino-acid polypeptide reads, in one-letter code: Ribosomal RNA large subunit methyltransferase H (155 aa).

Residues L73, G104, and 123–128 (LSALTL) each bind S-adenosyl-L-methionine.

The protein belongs to the RNA methyltransferase RlmH family. In terms of assembly, homodimer.

The protein resides in the cytoplasm. It carries out the reaction pseudouridine(1915) in 23S rRNA + S-adenosyl-L-methionine = N(3)-methylpseudouridine(1915) in 23S rRNA + S-adenosyl-L-homocysteine + H(+). Functionally, specifically methylates the pseudouridine at position 1915 (m3Psi1915) in 23S rRNA. In Coxiella burnetii (strain Dugway 5J108-111), this protein is Ribosomal RNA large subunit methyltransferase H.